A 175-amino-acid polypeptide reads, in one-letter code: Viral interleukin-10 homolog (175 aa).

An N-terminal signal peptide occupies residues 1–19; it reads MLSVMVSSSLVLIVFFLGA. 2 cysteine pairs are disulfide-bonded: cysteine 37/cysteine 127 and cysteine 81/cysteine 132. Residue asparagine 151 is glycosylated (N-linked (GlcNAc...) asparagine; by host).

It belongs to the IL-10 family. In terms of assembly, homodimer; disulfide-linked.

The protein resides in the secreted. Functionally, functional viral IL-10 homolog. Can bind to the human IL-10 receptor and compete with human IL-10 for binding sites. Requires both subunits of the human IL-10 receptor complex to induce signal transduction events and biological activities. IL-10 signaling pathway has several immunosuppressive activities that are exploited by the virus. Inhibits TLR-induced type I interferon production in host plasmacytoid dendritic cells. In Human cytomegalovirus (strain AD169) (HHV-5), this protein is Viral interleukin-10 homolog (UL111A).